The following is a 233-amino-acid chain: tRNA (guanine-N(1)-)-methyltransferase (233 aa).

Residues Gly-113 and Val-133–Leu-138 contribute to the S-adenosyl-L-methionine site.

Belongs to the RNA methyltransferase TrmD family. As to quaternary structure, homodimer.

The protein localises to the cytoplasm. The catalysed reaction is guanosine(37) in tRNA + S-adenosyl-L-methionine = N(1)-methylguanosine(37) in tRNA + S-adenosyl-L-homocysteine + H(+). Functionally, specifically methylates guanosine-37 in various tRNAs. This chain is tRNA (guanine-N(1)-)-methyltransferase, found in Rhizobium etli (strain ATCC 51251 / DSM 11541 / JCM 21823 / NBRC 15573 / CFN 42).